A 555-amino-acid polypeptide reads, in one-letter code: Phosphoglucomutase (555 aa).

Residues threonine 45, arginine 49, 148–149 (SH), and lysine 158 contribute to the substrate site. The active-site Phosphoserine intermediate is serine 148. Position 148 (serine 148) interacts with Mg(2+). The Mg(2+) site is built by aspartate 306, aspartate 308, and aspartate 310. Substrate contacts are provided by residues 310–311 (DR) and 393–395 (EES).

This sequence belongs to the phosphohexose mutase family. Requires Mg(2+) as cofactor.

The catalysed reaction is alpha-D-glucose 1-phosphate = alpha-D-glucose 6-phosphate. In terms of biological role, this enzyme participates in both the breakdown and synthesis of glucose. The chain is Phosphoglucomutase (celB) from Komagataeibacter xylinus (Gluconacetobacter xylinus).